The chain runs to 60 residues: Large ribosomal subunit protein uL30 (60 aa).

This sequence belongs to the universal ribosomal protein uL30 family. Part of the 50S ribosomal subunit.

The chain is Large ribosomal subunit protein uL30 from Dehalococcoides mccartyi (strain ATCC BAA-2100 / JCM 16839 / KCTC 5957 / BAV1).